Consider the following 336-residue polypeptide: Glucan endo-1,3-beta-glucosidase A (336 aa).

The N-terminal stretch at 1–23 is a signal peptide; that stretch reads MAFLSSLLASLLLVGLLIQITGA. Gln24 bears the Pyrrolidone carboxylic acid mark. Catalysis depends on Glu118, which acts as the Proton donor. Glu257 acts as the Nucleophile in catalysis.

Belongs to the glycosyl hydrolase 17 family.

Its subcellular location is the secreted. The protein resides in the extracellular space. The catalysed reaction is Hydrolysis of (1-&gt;3)-beta-D-glucosidic linkages in (1-&gt;3)-beta-D-glucans.. Its function is as follows. Implicated in the defense of plants against pathogens. The polypeptide is Glucan endo-1,3-beta-glucosidase A (Solanum lycopersicum (Tomato)).